The sequence spans 488 residues: Probable metabolite transport protein YBR241C (488 aa).

Topologically, residues 1–18 are cytoplasmic; that stretch reads MAETERLMPNGGSRETKP. Residues 19 to 39 traverse the membrane as a helical segment; sequence LITGHLILGTIVACLGSIQYG. The Vacuolar portion of the chain corresponds to 40 to 87; sequence YHIAELNAPQEFLSCSRFEAPDENISYDDTWVGQHGLKQCIALTDSQY. Asparagine 63 carries an N-linked (GlcNAc...) asparagine glycan. A helical membrane pass occupies residues 88 to 108; it reads GAITSIFSIGGLFGSYYAGNW. The Cytoplasmic portion of the chain corresponds to 109 to 121; the sequence is ANRYGRKYVSMGA. A helical transmembrane segment spans residues 122 to 142; it reads SAMCMVSSLLLFFSNSYLQLL. The Vacuolar portion of the chain corresponds to 143 to 146; sequence FGRF. The chain crosses the membrane as a helical span at residues 147 to 167; sequence LVGMSCGTAIVITPLFINEIA. Residues 168–178 are Cytoplasmic-facing; that stretch reads PVEWRGAMGSM. A helical membrane pass occupies residues 179–198; sequence NQVSINLGILLTQTLALKYA. Topologically, residues 199-204 are vacuolar; the sequence is DSYNWR. Residues 205-225 traverse the membrane as a helical segment; that stretch reads WLLFSGSVIAVANILAWLKVD. At 226 to 299 the chain is on the cytoplasmic side; sequence ESPRWLVSHG…DPSYKKPRTV (74 aa). The span at 258 to 279 shows a compositional bias: basic and acidic residues; the sequence is EIQDWQRSHGHNRDPESSEETH. The disordered stretch occupies residues 258–281; it reads EIQDWQRSHGHNRDPESSEETHSG. A helical transmembrane segment spans residues 300 to 320; the sequence is ILAILSCQQFCGINSIIFYGV. At 321-322 the chain is on the vacuolar side; sequence KV. A helical transmembrane segment spans residues 323-337; the sequence is IGKILPDYSIQVNFA. Topologically, residues 338 to 344 are cytoplasmic; it reads ISILNVV. The chain crosses the membrane as a helical span at residues 345-364; the sequence is VTLAASAIIDHVGRRPLLLA. Over 365–390 the chain is Vacuolar; it reads STTVMTAMSLLISVGLTLSVSFLLVT. Residues 391–411 form a helical membrane-spanning segment; that stretch reads ATFVYIAAFAIGLGPIPFLII. Topologically, residues 412-419 are cytoplasmic; the sequence is GELSYPQD. A helical membrane pass occupies residues 420–442; it reads AATAQSFGTVCNWLATFIVGYLF. The Vacuolar segment spans residues 443–446; that stretch reads PIGH. A helical transmembrane segment spans residues 447-463; it reads GLMGGYVFAIFAAIAAM. The Cytoplasmic portion of the chain corresponds to 464–488; that stretch reads FATYVYKRVPETKGKTTYSEVWAGY.

This sequence belongs to the major facilitator superfamily. Sugar transporter (TC 2.A.1.1) family.

It localises to the vacuole membrane. This Saccharomyces cerevisiae (strain ATCC 204508 / S288c) (Baker's yeast) protein is Probable metabolite transport protein YBR241C.